The primary structure comprises 206 residues: Crossover junction endodeoxyribonuclease RuvC (206 aa).

Active-site residues include Asp7, Glu67, and Asp138. Residues Asp7, Glu67, and Asp138 each contribute to the Mg(2+) site.

This sequence belongs to the RuvC family. As to quaternary structure, homodimer which binds Holliday junction (HJ) DNA. The HJ becomes 2-fold symmetrical on binding to RuvC with unstacked arms; it has a different conformation from HJ DNA in complex with RuvA. In the full resolvosome a probable DNA-RuvA(4)-RuvB(12)-RuvC(2) complex forms which resolves the HJ. Requires Mg(2+) as cofactor.

Its subcellular location is the cytoplasm. It catalyses the reaction Endonucleolytic cleavage at a junction such as a reciprocal single-stranded crossover between two homologous DNA duplexes (Holliday junction).. Its function is as follows. The RuvA-RuvB-RuvC complex processes Holliday junction (HJ) DNA during genetic recombination and DNA repair. Endonuclease that resolves HJ intermediates. Cleaves cruciform DNA by making single-stranded nicks across the HJ at symmetrical positions within the homologous arms, yielding a 5'-phosphate and a 3'-hydroxyl group; requires a central core of homology in the junction. The consensus cleavage sequence is 5'-(A/T)TT(C/G)-3'. Cleavage occurs on the 3'-side of the TT dinucleotide at the point of strand exchange. HJ branch migration catalyzed by RuvA-RuvB allows RuvC to scan DNA until it finds its consensus sequence, where it cleaves and resolves the cruciform DNA. The polypeptide is Crossover junction endodeoxyribonuclease RuvC (Anaeromyxobacter sp. (strain Fw109-5)).